A 220-amino-acid polypeptide reads, in one-letter code: Guanylate kinase (220 aa).

The Guanylate kinase-like domain maps to glycine 14–asparagine 194. Residue serine 21–serine 28 coordinates ATP.

This sequence belongs to the guanylate kinase family.

The protein resides in the cytoplasm. It carries out the reaction GMP + ATP = GDP + ADP. In terms of biological role, essential for recycling GMP and indirectly, cGMP. The protein is Guanylate kinase of Brucella abortus (strain 2308).